The sequence spans 689 residues: Glycine--tRNA ligase beta subunit (689 aa).

It belongs to the class-II aminoacyl-tRNA synthetase family. Tetramer of two alpha and two beta subunits.

It is found in the cytoplasm. The enzyme catalyses tRNA(Gly) + glycine + ATP = glycyl-tRNA(Gly) + AMP + diphosphate. The protein is Glycine--tRNA ligase beta subunit of Coxiella burnetii (strain RSA 331 / Henzerling II).